A 259-amino-acid chain; its full sequence is 7-cyano-7-deazaguanine synthase (259 aa).

32–42 (LSGGLDSVTCL) is a binding site for ATP. Cysteine 223, cysteine 233, cysteine 236, and cysteine 239 together coordinate Zn(2+).

It belongs to the QueC family. The cofactor is Zn(2+).

It catalyses the reaction 7-carboxy-7-deazaguanine + NH4(+) + ATP = 7-cyano-7-deazaguanine + ADP + phosphate + H2O + H(+). It participates in purine metabolism; 7-cyano-7-deazaguanine biosynthesis. Catalyzes the ATP-dependent conversion of 7-carboxy-7-deazaguanine (CDG) to 7-cyano-7-deazaguanine (preQ(0)). The sequence is that of 7-cyano-7-deazaguanine synthase from Psychrobacter cryohalolentis (strain ATCC BAA-1226 / DSM 17306 / VKM B-2378 / K5).